We begin with the raw amino-acid sequence, 659 residues long: WD repeat-containing protein 48 homolog (659 aa).

WD repeat units follow at residues 27 to 66, 73 to 112, 115 to 154, 166 to 205, 208 to 247, 250 to 289, 292 to 331, and 337 to 376; these read RHRN…SQEP, HHND…CMST, THRD…ALTA, GSKD…KIAK, GHAE…CVQT, VHSE…NSVL, EERA…KLSF, and KGGA…KVED. A disordered region spans residues 592–613; sequence ASTGNSNSSQNNSQSDANSEGS. The segment covering 596–610 has biased composition (low complexity); the sequence is NSNSSQNNSQSDANS.

The protein belongs to the WD repeat WDR48 family. In terms of assembly, catalytic component of the Usp12-46 deubiquitylase complex consisting of Usp12-46, Wdr20 and Uaf1; regulatory subunit that, together wtih Wdr20, stabilizes Usp12-46. The Usp12-46 deubiquitylase complex associates with arr/arrow; the interaction leads to deubiquitination and stabilization of arr/arrow.

Regulatory component of the Usp12-46 deubiquitylase complex. activates deubiquitination by increasing the catalytic turnover without increasing the affinity of deubiquitinating enzymes for the substrate. The complex deubiquitylates the wg/wingless-signaling receptor arr/arrow, which stabilizes the receptor and increases its concentration at the cell surface; this enhances the sensitivity of cells to wg/wingless-signal stimulation. This increases the amplitude and spatial range of the signaling response to the wg/wingless morphogen gradient, facilitating the precise concentration-dependent regulation of its target genes. Together with Wdr20 and Usp12-46 required for wg/wingless-mediated signaling in the wing imaginal disc and for wg/wingless-dependent regulation of intestinal stem cell proliferation. The protein is WD repeat-containing protein 48 homolog of Aedes aegypti (Yellowfever mosquito).